Reading from the N-terminus, the 156-residue chain is Transthyretin-like protein 1 (156 aa).

A signal peptide spans 1–17 (MKIALSFLFLTSTFSNA). Asparagine 151 carries an N-linked (GlcNAc...) asparagine glycan.

It belongs to the nematode transthyretin-like family.

The protein resides in the secreted. The chain is Transthyretin-like protein 1 (ttr-1) from Caenorhabditis elegans.